An 856-amino-acid polypeptide reads, in one-letter code: MSNSQVQPETLSEYLAHLPMTDEQRAELAGCQSFSELHERLSSKTFDAPTEAAQASVGKRLILSTAEELQDAEMLVLDASGRVSMKATPPIRRTKVVPEPWRTNILVRGWRRLTGRTNPPQPPKDANVLPAARWRTVGSIRRYILLVLMLGQTIVAGWYMKGIMPYQGWSFVDLEEVLHQPLLQTATQVLPYALQTSILIMFGILFCWVSAGFWTALMGFLELLTGHDKYRISGKSAGNEPIPKDARTALVMPICNEDVPRVFAGLRATFESVAATGDLDRFDFFVLSDSNDTDICVAEQQAWLDVCREAKGFGKIFYRRRRRRVKRKSGNLDDFCRRWGGDYKYMVVLDADSVMSGECLTSLVRLMEATPDAGIIQTAPRASGMDTLYARMQQFATRVYGPLFTAGLHFWQLGESHYWGHNAIIRMKPFIDHCALAPLPGKGAFSGAILSHDFVEAALMRRAGWGVWIAYDLPGSYEELPPNLLDELKRDRRWCHGNLMNFRLFLVKGMHPVHRAVFLTGVMSYLSAPLWFFFLVLSTALLAVNTLMEPQYFLEPRQLYPLWPQWHPDKAIALFSTTIVLLFLPKLLSIILIWAKGAKEFGGKFKVTLSMLLEMLFSMLLAPVRMIFHTRFVLAAFLGWAATWNSPQRDDDSTPWSEAVKRHGPQTLLGFFWALLVIWLNPSFLWWLVPIVGSLMLSIPVSVISSRVGLGLKSRDESLFLIPEEYNPPQALLATDQYTHENRWHALNDGFVRAVVDPQQNALACSLATSRHGQAEPIEWLRQERVRHAIKVGPAGLNNHDRLQLLSDPVALARLHEQVWAEGHAEWLDAWRASVKADPHAPLLPLKPVSLQAQPA.

6 helical membrane-spanning segments follow: residues 144–164 (ILLV…KGIM), 198–218 (ILIM…TALM), 517–537 (VFLT…FLVL), 574–594 (LFST…ILIW), 608–628 (TLSM…RMIF), and 691–711 (IVGS…VGLG).

Belongs to the glycosyltransferase 2 family. OpgH subfamily.

It is found in the cell inner membrane. The protein operates within glycan metabolism; osmoregulated periplasmic glucan (OPG) biosynthesis. Its function is as follows. Involved in the biosynthesis of osmoregulated periplasmic glucans (OPGs). The protein is Glucans biosynthesis glucosyltransferase H of Pseudomonas fluorescens (strain Pf0-1).